Consider the following 359-residue polypeptide: MKMTFRWFGEGYDSISLDKIRQIPGKPGIVSAIYDVPVGEVWPEEKIKKLKETVENAGLELEVIESVNVHEDIKLGLPSRDRYIENYQQTLRNLAKFGIKVVCYNFMPIFDWTRSDLAKVLPDGSTALSYEEEKVQKVDPNRMVEEVEANSNGFELPGWEPERLKTLKVLFEQYKSVDEEKLLKNLGYFLRAIIPVAEEVDIKMAIHPDDPPWSIFGLPRIVKSKESLEKIMALVDSPYNGITLCSGSLGANPDNDIPALIRYFGAKGRIHFGHVRNIKIHSLRNFDESSHLSSDGSLDMFEIMKAYHDIDFKGYIRPDHGRMIWGEVGRPGYGLYDRALGIAYLNGLWEAIGKMKKVC.

Belongs to the mannonate dehydratase family. Fe(2+) is required as a cofactor. Mn(2+) serves as cofactor.

It catalyses the reaction D-mannonate = 2-dehydro-3-deoxy-D-gluconate + H2O. The protein operates within carbohydrate metabolism; pentose and glucuronate interconversion. Functionally, catalyzes the dehydration of D-mannonate. In Moorella thermoacetica (strain ATCC 39073 / JCM 9320), this protein is Mannonate dehydratase.